The primary structure comprises 214 residues: ATP-dependent Clp protease proteolytic subunit (214 aa).

Ser110 acts as the Nucleophile in catalysis. His135 is a catalytic residue.

The protein belongs to the peptidase S14 family. Fourteen ClpP subunits assemble into 2 heptameric rings which stack back to back to give a disk-like structure with a central cavity, resembling the structure of eukaryotic proteasomes.

The protein localises to the cytoplasm. It catalyses the reaction Hydrolysis of proteins to small peptides in the presence of ATP and magnesium. alpha-casein is the usual test substrate. In the absence of ATP, only oligopeptides shorter than five residues are hydrolyzed (such as succinyl-Leu-Tyr-|-NHMec, and Leu-Tyr-Leu-|-Tyr-Trp, in which cleavage of the -Tyr-|-Leu- and -Tyr-|-Trp bonds also occurs).. In terms of biological role, cleaves peptides in various proteins in a process that requires ATP hydrolysis. Has a chymotrypsin-like activity. Plays a major role in the degradation of misfolded proteins. The chain is ATP-dependent Clp protease proteolytic subunit from Legionella pneumophila (strain Paris).